The chain runs to 702 residues: MA3 DOMAIN-CONTAINING TRANSLATION REGULATORY FACTOR 1 (702 aa).

Residues 39 to 66 form a disordered region; sequence LNIKSPTGGKGPVAGIPNRHVRRTHSGK. Over residues 57–66 the composition is skewed to basic residues; it reads RHVRRTHSGK. The MI 1 domain occupies 122 to 243; sequence DYKKSVVSII…PPVFLVRSKK (122 aa). Positions 273 to 280 match the Nuclear localization signal 1 motif; it reads EKKWGGST. MI domains lie at 286-407, 420-541, and 583-702; these read ETKK…TSDQ, QYKK…DIST, and DAKD…SATQ. Positions 458–465 match the Nuclear localization signal 2 motif; it reads LKRLITLA.

The protein belongs to the PDCD4 family. As to quaternary structure, binds to EIF4A1, S6K1 and S6K2. The association with ribosomes is modulated by cellular energy status and TOR activity. Post-translationally, phosphorylation by S6 kinases (e.g. S6K1 and S6K2) is modulated by cellular energy status and TOR activity. In terms of tissue distribution, mostly expressed in vegetative tissues, such as leaves, roots and stems, and, to a lower extent, in reproductive tissues, such as flower buds and flowers.

The protein localises to the nucleus. It localises to the cytoplasm. It is found in the cytosol. Its function is as follows. Involved in target of rapamycin (TOR)-regulated translation control, especially under energy-deficient conditions. This chain is MA3 DOMAIN-CONTAINING TRANSLATION REGULATORY FACTOR 1, found in Arabidopsis thaliana (Mouse-ear cress).